Here is a 302-residue protein sequence, read N- to C-terminus: Nuclear egress protein 1 (302 aa).

Residues 1–17 are compositionally biased toward polar residues; sequence MPKSVSSHISLATSTGR. A disordered region spans residues 1–22; the sequence is MPKSVSSHISLATSTGRSGPRD. The segment at 102-227 adopts a CCCH-type zinc-finger fold; it reads CVSLSPFGHS…CILFKTRALH (126 aa).

This sequence belongs to the herpesviridae NEC1 protein family. In terms of assembly, forms a heterohexameric complex with NEC2. Interacts with capsid vertex specific component 2/CVC2; this interaction directs the capsid to the host inner nuclear membrane to initiate budding. In terms of processing, phosphorylated at serine residues in the N-terminus. This phosphorylation regulates the localization within the inner nuclear membrane.

The protein resides in the host nucleus inner membrane. Plays an essential role in virion nuclear egress, the first step of virion release from infected cell. Within the host nucleus, NEC1 interacts with the newly formed capsid through the vertexes and directs it to the inner nuclear membrane by associating with NEC2. Induces the budding of the capsid at the inner nuclear membrane as well as its envelopment into the perinuclear space. There, the NEC1/NEC2 complex promotes the fusion of the enveloped capsid with the outer nuclear membrane and the subsequent release of the viral capsid into the cytoplasm where it will reach the secondary budding sites in the host Golgi or trans-Golgi network. In Homo sapiens (Human), this protein is Nuclear egress protein 1.